Consider the following 64-residue polypeptide: Large ribosomal subunit protein bL35 (64 aa).

Over residues Met-1 to Arg-15 the composition is skewed to basic residues. A disordered region spans residues Met-1–Val-22.

This sequence belongs to the bacterial ribosomal protein bL35 family.

The protein is Large ribosomal subunit protein bL35 of Frankia casuarinae (strain DSM 45818 / CECT 9043 / HFP020203 / CcI3).